We begin with the raw amino-acid sequence, 366 residues long: Chorismate synthase (366 aa).

Arg48 and Arg54 together coordinate NADP(+). Residues 125–127, 238–239, Gly278, 293–297, and Arg319 contribute to the FMN site; these read RSS, NA, and KPTSS.

It belongs to the chorismate synthase family. In terms of assembly, homotetramer. The cofactor is FMNH2.

The catalysed reaction is 5-O-(1-carboxyvinyl)-3-phosphoshikimate = chorismate + phosphate. It functions in the pathway metabolic intermediate biosynthesis; chorismate biosynthesis; chorismate from D-erythrose 4-phosphate and phosphoenolpyruvate: step 7/7. Its function is as follows. Catalyzes the anti-1,4-elimination of the C-3 phosphate and the C-6 proR hydrogen from 5-enolpyruvylshikimate-3-phosphate (EPSP) to yield chorismate, which is the branch point compound that serves as the starting substrate for the three terminal pathways of aromatic amino acid biosynthesis. This reaction introduces a second double bond into the aromatic ring system. The sequence is that of Chorismate synthase from Neisseria meningitidis serogroup C / serotype 2a (strain ATCC 700532 / DSM 15464 / FAM18).